The chain runs to 210 residues: Tetraspanin-31 (210 aa).

Over 1–12 the chain is Cytoplasmic; that stretch reads MVCGGFACSRNA. A helical membrane pass occupies residues 13 to 33; it reads LCALNVVYMLVGFLLIGVAAW. Residues 34 to 44 lie on the Extracellular side of the membrane; sequence GKGLGVVSSIH. A helical membrane pass occupies residues 45 to 65; sequence IIGGVIAVGVFLLLIAVAGLV. At 66–72 the chain is on the cytoplasmic side; sequence GAANHHQ. The chain crosses the membrane as a helical span at residues 73–93; the sequence is VLLFFYMIILGLVFIFQFGIS. Over 94–173 the chain is Extracellular; sequence CSCLAINRNT…FLKHSDKALK (80 aa). 3 N-linked (GlcNAc...) asparagine glycosylation sites follow: N109, N117, and N134. The helical transmembrane segment at 174–194 threads the bilayer; sequence ILGGVGLFFSFTEILGVWLAM. The Cytoplasmic portion of the chain corresponds to 195-210; it reads RFRNQKDPRANPSAFL.

Belongs to the tetraspanin (TM4SF) family.

Its subcellular location is the membrane. The protein is Tetraspanin-31 (Tspan31) of Mus musculus (Mouse).